The following is a 170-amino-acid chain: Acireductone dioxygenase (170 aa).

His99, His101, Glu105, and His144 together coordinate Fe(2+). 4 residues coordinate Ni(2+): His99, His101, Glu105, and His144.

This sequence belongs to the acireductone dioxygenase (ARD) family. As to quaternary structure, monomer. The cofactor is Fe(2+). Requires Ni(2+) as cofactor.

It catalyses the reaction 1,2-dihydroxy-5-(methylsulfanyl)pent-1-en-3-one + O2 = 3-(methylsulfanyl)propanoate + CO + formate + 2 H(+). It carries out the reaction 1,2-dihydroxy-5-(methylsulfanyl)pent-1-en-3-one + O2 = 4-methylsulfanyl-2-oxobutanoate + formate + 2 H(+). It functions in the pathway amino-acid biosynthesis; L-methionine biosynthesis via salvage pathway; L-methionine from S-methyl-5-thio-alpha-D-ribose 1-phosphate: step 5/6. In terms of biological role, catalyzes 2 different reactions between oxygen and the acireductone 1,2-dihydroxy-3-keto-5-methylthiopentene (DHK-MTPene) depending upon the metal bound in the active site. Fe-containing acireductone dioxygenase (Fe-ARD) produces formate and 2-keto-4-methylthiobutyrate (KMTB), the alpha-ketoacid precursor of methionine in the methionine recycle pathway. Ni-containing acireductone dioxygenase (Ni-ARD) produces methylthiopropionate, carbon monoxide and formate, and does not lie on the methionine recycle pathway. The protein is Acireductone dioxygenase of Bacillus thuringiensis (strain Al Hakam).